The following is a 618-amino-acid chain: GMC oxidoreductase family protein Mala s 12 (618 aa).

A signal peptide spans 1-23; sequence MKGIVSWAVVSAALVLSATESLA. FAD-binding residues include Val129 and Val280. The active-site Proton donor is His556. His599 (proton acceptor) is an active-site residue.

Belongs to the GMC oxidoreductase family. Monomer. The cofactor is FAD.

It is found in the secreted. This chain is GMC oxidoreductase family protein Mala s 12, found in Malassezia sympodialis (strain ATCC 42132) (Atopic eczema-associated yeast).